The primary structure comprises 199 residues: Peptidyl-tRNA hydrolase (199 aa).

Tyrosine 15 provides a ligand contact to tRNA. Histidine 20 functions as the Proton acceptor in the catalytic mechanism. Residues tyrosine 66, asparagine 68, and asparagine 114 each contribute to the tRNA site.

Belongs to the PTH family. In terms of assembly, monomer.

The protein localises to the cytoplasm. It catalyses the reaction an N-acyl-L-alpha-aminoacyl-tRNA + H2O = an N-acyl-L-amino acid + a tRNA + H(+). Its function is as follows. Hydrolyzes ribosome-free peptidyl-tRNAs (with 1 or more amino acids incorporated), which drop off the ribosome during protein synthesis, or as a result of ribosome stalling. Catalyzes the release of premature peptidyl moieties from peptidyl-tRNA molecules trapped in stalled 50S ribosomal subunits, and thus maintains levels of free tRNAs and 50S ribosomes. The chain is Peptidyl-tRNA hydrolase from Burkholderia ambifaria (strain MC40-6).